The chain runs to 692 residues: MAREFSLKNTRNIGIMAHIDAGKTTTTERILYYTGRIHKIGETHEGASQMDWMEQEQERGITITSAATTAQWNGHRVNIIDTPGHVDFTVEVERSLRVLDGAVAVLDAQSGVEPQTETVWRQATTYGVPRVVFVNKMDKIGADFLYSVKTLHDRLQANAYAIQLPIGAEDDFKGIIDLVEMKTYMYNNDLGTDIEVTDGFPADMADQAEELRGQLIEGVADFNEELMMKYLEGEEISIDELKAAIRQATLSVEFYPVLVGSAFKNKGVQLMLNAVVDYLPSPVDVESIKGINLDTEEEITREPSDEAPFSALAFKVMTDPYVGKLTFFRVYSGTAEAGSYVKNSTKGKRERLGRILQMHANSREEIPMVFAGDIAAAVGFKDTTTGDTLCSEKDNIVLESMTFPEPVISVAIEPKSKADQDKMGQALAKLAEEDPTFRTETNPETGQTIISGMGELHLDILVDRMRREFKVEANVGAPQVAYRETIRGAAKIDSKFVRQSGGRGQYGHVVVEFEPNEEGAGFEFENKIVGGVVPREYVPAVQNGIEEALENGILAGYPVVDVKARLVFGSYHDVDSNEMAFKVAASMAVKQLKDQAKAVILEPMMRVEVVIPEEYMGDIMGDVTSRRGRVEGMEARGNAQVVKAMIPLSEMFGYATSLRSRTQGRGTYSMHFDHYEEVPKSIAEEIVKKANG.

In terms of domain architecture, tr-type G spans 8–283 (KNTRNIGIMA…AVVDYLPSPV (276 aa)). Residues 17–24 (AHIDAGKT), 81–85 (DTPGH), and 135–138 (NKMD) each bind GTP.

The protein belongs to the TRAFAC class translation factor GTPase superfamily. Classic translation factor GTPase family. EF-G/EF-2 subfamily.

It is found in the cytoplasm. In terms of biological role, catalyzes the GTP-dependent ribosomal translocation step during translation elongation. During this step, the ribosome changes from the pre-translocational (PRE) to the post-translocational (POST) state as the newly formed A-site-bound peptidyl-tRNA and P-site-bound deacylated tRNA move to the P and E sites, respectively. Catalyzes the coordinated movement of the two tRNA molecules, the mRNA and conformational changes in the ribosome. This is Elongation factor G from Exiguobacterium sp. (strain ATCC BAA-1283 / AT1b).